The primary structure comprises 369 residues: Protein DUF642 L-GALACTONO-1,4-LACTONE-RESPONSIVE GENE 2 (369 aa).

The first 19 residues, 1–19 (MEGVTVVSFFLLFIATAMA), serve as a signal peptide directing secretion. Residue Asn-125 is glycosylated (N-linked (GlcNAc...) asparagine).

Expressed in roots, seedlings and leaves.

It is found in the secreted. The protein resides in the cell wall. Its function is as follows. Involved in the regulation of testa rupture during seed germination. Required during roots and rosettes development. The sequence is that of Protein DUF642 L-GALACTONO-1,4-LACTONE-RESPONSIVE GENE 2 from Arabidopsis thaliana (Mouse-ear cress).